A 382-amino-acid chain; its full sequence is 3-phytase (382 aa).

The first 26 residues, 1-26 (MKVPKTMLLSTAAGLLLSLTATSVSA), serve as a signal peptide directing secretion. The 335-residue stretch at 27–361 (HYVNEEHHFK…VSWEQIAQHL (335 aa)) folds into the BPP domain.

The protein resides in the secreted. The enzyme catalyses 1D-myo-inositol hexakisphosphate + H2O = 1D-myo-inositol 1,2,4,5,6-pentakisphosphate + phosphate. In Bacillus subtilis (strain 168), this protein is 3-phytase (phy).